A 484-amino-acid polypeptide reads, in one-letter code: uncharacterized protein (484 aa).

12 helical membrane-spanning segments follow: residues 19-39, 78-98, 110-130, 134-154, 165-185, 199-219, 249-269, 289-309, 321-341, 360-380, 398-418, and 440-460; these read LSFG…MIFV, VNWG…WLIV, LFFM…GFII, IFAI…SNYL, FSPF…AGII, IVFL…IILG, TWYW…PFTF, ISVF…TIGL, ISTI…VFVL, LFLF…GVML, FGLI…ITSL, and LGAY…LALL.

It is found in the cell membrane. This is an uncharacterized protein from Mesomycoplasma hyopneumoniae (strain J / ATCC 25934 / NCTC 10110) (Mycoplasma hyopneumoniae).